Consider the following 876-residue polypeptide: Valine--tRNA ligase (876 aa).

A 'HIGH' region motif is present at residues 44–54 (PNVTGKLHLGH). The short motif at 520–524 (KMSKS) is the 'KMSKS' region element. Lys-523 contacts ATP. Residues 805-876 (LEGLIDMDKE…VKNRIEQLKA (72 aa)) are a coiled coil.

It belongs to the class-I aminoacyl-tRNA synthetase family. ValS type 1 subfamily. Monomer.

The protein resides in the cytoplasm. The enzyme catalyses tRNA(Val) + L-valine + ATP = L-valyl-tRNA(Val) + AMP + diphosphate. In terms of biological role, catalyzes the attachment of valine to tRNA(Val). As ValRS can inadvertently accommodate and process structurally similar amino acids such as threonine, to avoid such errors, it has a 'posttransfer' editing activity that hydrolyzes mischarged Thr-tRNA(Val) in a tRNA-dependent manner. The polypeptide is Valine--tRNA ligase (Staphylococcus haemolyticus (strain JCSC1435)).